Reading from the N-terminus, the 303-residue chain is MSKGKKIFAIIFGIILVLFLAVVGMGAKLYWDVSKSMDKTYETVERSKKSQVNLNNKEPFSVLLLGIDTGDDGRVEQGRSDTTIVATVNPRDKQTTLVSLARDTYVDIPGQGKQDKLNHAYAFGGASLAMDTVENYLNIPINHYVSINMAGLKELVNAVGGIEVNNNLTFSQDGYDFTIGKISLDGEQALSYSRMRYEDPNGDYGRQERQRKVIEGIVQKVLSLNSVSNYQEILTAVSDNMKTDLSFDDMKKIALDYRSAFGKVKQDQLQGTGFMQDGVSYQRVDEQELTRVQQELKNQLNTK.

Residues 1 to 6 are Cytoplasmic-facing; sequence MSKGKK. Residues 7-27 form a helical; Signal-anchor for type II membrane protein membrane-spanning segment; it reads IFAIIFGIILVLFLAVVGMGA. Residues 28–303 are Extracellular-facing; the sequence is KLYWDVSKSM…QELKNQLNTK (276 aa).

The protein belongs to the LytR/CpsA/Psr (LCP) family.

The protein resides in the cell membrane. It functions in the pathway cell wall biogenesis. Its function is as follows. May catalyze the final step in cell wall teichoic acid biosynthesis, the transfer of the anionic cell wall polymers (APs) from their lipid-linked precursor to the cell wall peptidoglycan (PG). This Enterococcus faecalis (strain ATCC 700802 / V583) protein is Polyisoprenyl-teichoic acid--peptidoglycan teichoic acid transferase TagU.